Reading from the N-terminus, the 288-residue chain is 33 kDa chaperonin (288 aa).

Disulfide bonds link cysteine 225–cysteine 227 and cysteine 258–cysteine 261.

It belongs to the HSP33 family. Post-translationally, under oxidizing conditions two disulfide bonds are formed involving the reactive cysteines. Under reducing conditions zinc is bound to the reactive cysteines and the protein is inactive.

The protein resides in the cytoplasm. Functionally, redox regulated molecular chaperone. Protects both thermally unfolding and oxidatively damaged proteins from irreversible aggregation. Plays an important role in the bacterial defense system toward oxidative stress. In Shewanella denitrificans (strain OS217 / ATCC BAA-1090 / DSM 15013), this protein is 33 kDa chaperonin.